The sequence spans 120 residues: Large ribosomal subunit protein bL12 (120 aa).

The protein belongs to the bacterial ribosomal protein bL12 family. In terms of assembly, homodimer. Part of the ribosomal stalk of the 50S ribosomal subunit. Forms a multimeric L10(L12)X complex, where L10 forms an elongated spine to which 2 to 4 L12 dimers bind in a sequential fashion. Binds GTP-bound translation factors.

Its function is as follows. Forms part of the ribosomal stalk which helps the ribosome interact with GTP-bound translation factors. Is thus essential for accurate translation. The sequence is that of Large ribosomal subunit protein bL12 from Haemophilus ducreyi (strain 35000HP / ATCC 700724).